Consider the following 317-residue polypeptide: Probable pathogenesis-related protein CaO19.6200 (317 aa).

The first 23 residues, 1–23, serve as a signal peptide directing secretion; sequence MKFLQSFPVILAVFSFAANLVSS. Disordered stretches follow at residues 52–116 and 155–179; these read RLET…TTVT and PSAP…DSQL. The span at 58–76 shows a compositional bias: low complexity; the sequence is PTSTTTTIVIPSSKPSSPE. Polar residues-rich tracts occupy residues 84–116 and 168–179; these read QPMF…TTVT and ENNSGTNDDSQL. Residue Asn169 is glycosylated (N-linked (GlcNAc...) asparagine). In terms of domain architecture, SCP spans 187 to 297; sequence LEAHNIKRAS…GWGLYIICNY (111 aa).

This sequence belongs to the CRISP family.

Its subcellular location is the secreted. In terms of biological role, secreted protein that acts as a virulence factor during infections. In Candida albicans (strain SC5314 / ATCC MYA-2876) (Yeast), this protein is Probable pathogenesis-related protein CaO19.6200.